The following is a 357-amino-acid chain: Protein RecA (357 aa).

67 to 74 (GPESSGKT) contributes to the ATP binding site. The interval 335-357 (LSSSASDDENSEGNVDFETGEVF) is disordered.

This sequence belongs to the RecA family.

It is found in the cytoplasm. Can catalyze the hydrolysis of ATP in the presence of single-stranded DNA, the ATP-dependent uptake of single-stranded DNA by duplex DNA, and the ATP-dependent hybridization of homologous single-stranded DNAs. It interacts with LexA causing its activation and leading to its autocatalytic cleavage. This is Protein RecA from Shewanella sp. (strain MR-4).